Reading from the N-terminus, the 507-residue chain is Protein MosB (507 aa).

Positions 256-275 (QAHGALYKGQHVGLLSDIGC) form a DNA-binding region, H-T-H motif. Lys-282 is subject to N6-(pyridoxal phosphate)lysine.

This sequence belongs to the DegT/DnrJ/EryC1 family.

Functionally, involved in the biosynthesis of the rhizopine 3-O-methyl-scyllo-inosamine. May have a regulatory role in controlling the housekeeping genes within the nodule which are involved in the biosynthesis of the rhizopine backbone. This is Protein MosB (mosB) from Rhizobium meliloti (Ensifer meliloti).